We begin with the raw amino-acid sequence, 449 residues long: GTP-binding protein A (449 aa).

The tract at residues 1–77 (MFNINPYKSK…LSSKTENSLS (77 aa)) is disordered. Low complexity-rich tracts occupy residues 8–46 (KSKT…SSSS) and 67–77 (SLSSKTENSLS). The region spanning 149–386 (QNECNVLLLG…FMGHLRAKNK (238 aa)) is the AIG1-type G domain. Positions 158 to 165 (GRTGVGKS) are G1. Residue 158–165 (GRTGVGKS) participates in GTP binding. A G2 region spans residues 183–187 (SCTQD). The segment at 204–207 (DTPG) is G3. Residues 275–278 (TYAN) form a G4 region. The tract at residues 336-338 (ENS) is G5.

It belongs to the TRAFAC class TrmE-Era-EngA-EngB-Septin-like GTPase superfamily. AIG1/Toc34/Toc159-like paraseptin GTPase family. IAN subfamily.

In Dictyostelium discoideum (Social amoeba), this protein is GTP-binding protein A (gtpA).